The following is a 423-amino-acid chain: Imidazolonepropionase (423 aa).

Fe(3+) contacts are provided by histidine 78 and histidine 80. The Zn(2+) site is built by histidine 78 and histidine 80. The 4-imidazolone-5-propanoate site is built by arginine 87, tyrosine 150, and histidine 183. Tyrosine 150 provides a ligand contact to N-formimidoyl-L-glutamate. Residue histidine 247 coordinates Fe(3+). Histidine 247 is a binding site for Zn(2+). 4-imidazolone-5-propanoate is bound at residue glutamate 250. Aspartate 322 lines the Fe(3+) pocket. A Zn(2+)-binding site is contributed by aspartate 322. The N-formimidoyl-L-glutamate site is built by asparagine 324 and glycine 326. Serine 327 is a 4-imidazolone-5-propanoate binding site.

It belongs to the metallo-dependent hydrolases superfamily. HutI family. It depends on Zn(2+) as a cofactor. Fe(3+) is required as a cofactor.

The protein resides in the cytoplasm. It carries out the reaction 4-imidazolone-5-propanoate + H2O = N-formimidoyl-L-glutamate. Its pathway is amino-acid degradation; L-histidine degradation into L-glutamate; N-formimidoyl-L-glutamate from L-histidine: step 3/3. In terms of biological role, catalyzes the hydrolytic cleavage of the carbon-nitrogen bond in imidazolone-5-propanoate to yield N-formimidoyl-L-glutamate. It is the third step in the universal histidine degradation pathway. The sequence is that of Imidazolonepropionase from Bacillus cytotoxicus (strain DSM 22905 / CIP 110041 / 391-98 / NVH 391-98).